A 239-amino-acid polypeptide reads, in one-letter code: Probable transcriptional regulatory protein Sca_0317 (239 aa).

It belongs to the TACO1 family. YeeN subfamily.

The protein resides in the cytoplasm. The chain is Probable transcriptional regulatory protein Sca_0317 from Staphylococcus carnosus (strain TM300).